The sequence spans 246 residues: Pyridoxine 5'-phosphate synthase (246 aa).

Residue Asn-10 participates in 3-amino-2-oxopropyl phosphate binding. Residue 12–13 (DH) coordinates 1-deoxy-D-xylulose 5-phosphate. Residue Arg-21 coordinates 3-amino-2-oxopropyl phosphate. The Proton acceptor role is filled by His-46. Residues Arg-48 and His-53 each coordinate 1-deoxy-D-xylulose 5-phosphate. Glu-73 serves as the catalytic Proton acceptor. Residue Thr-103 coordinates 1-deoxy-D-xylulose 5-phosphate. The active-site Proton donor is the His-193. Residues Gly-194 and 215 to 216 (GH) contribute to the 3-amino-2-oxopropyl phosphate site.

It belongs to the PNP synthase family. Homooctamer; tetramer of dimers.

The protein resides in the cytoplasm. It catalyses the reaction 3-amino-2-oxopropyl phosphate + 1-deoxy-D-xylulose 5-phosphate = pyridoxine 5'-phosphate + phosphate + 2 H2O + H(+). It functions in the pathway cofactor biosynthesis; pyridoxine 5'-phosphate biosynthesis; pyridoxine 5'-phosphate from D-erythrose 4-phosphate: step 5/5. Functionally, catalyzes the complicated ring closure reaction between the two acyclic compounds 1-deoxy-D-xylulose-5-phosphate (DXP) and 3-amino-2-oxopropyl phosphate (1-amino-acetone-3-phosphate or AAP) to form pyridoxine 5'-phosphate (PNP) and inorganic phosphate. The polypeptide is Pyridoxine 5'-phosphate synthase (Rhodopirellula baltica (strain DSM 10527 / NCIMB 13988 / SH1)).